The sequence spans 864 residues: Leucine--tRNA ligase (864 aa).

The 'HIGH' region motif lies at 42-52 (PYPSGKLHMGH). A 'KMSKS' region motif is present at residues 624-628 (KMSKS). ATP is bound at residue lysine 627.

The protein belongs to the class-I aminoacyl-tRNA synthetase family.

The protein localises to the cytoplasm. It carries out the reaction tRNA(Leu) + L-leucine + ATP = L-leucyl-tRNA(Leu) + AMP + diphosphate. In Burkholderia vietnamiensis (strain G4 / LMG 22486) (Burkholderia cepacia (strain R1808)), this protein is Leucine--tRNA ligase.